A 227-amino-acid chain; its full sequence is 7-cyano-7-deazaguanine synthase (227 aa).

ATP is bound at residue 9–19; sequence LSGGLDSATVL. Zn(2+) is bound by residues C189, C199, C202, and C205.

Belongs to the QueC family. The cofactor is Zn(2+).

The enzyme catalyses 7-carboxy-7-deazaguanine + NH4(+) + ATP = 7-cyano-7-deazaguanine + ADP + phosphate + H2O + H(+). It functions in the pathway purine metabolism; 7-cyano-7-deazaguanine biosynthesis. Functionally, catalyzes the ATP-dependent conversion of 7-carboxy-7-deazaguanine (CDG) to 7-cyano-7-deazaguanine (preQ(0)). The chain is 7-cyano-7-deazaguanine synthase from Cupriavidus taiwanensis (strain DSM 17343 / BCRC 17206 / CCUG 44338 / CIP 107171 / LMG 19424 / R1) (Ralstonia taiwanensis (strain LMG 19424)).